The chain runs to 1285 residues: Transmembrane channel-like protein 1 (1285 aa).

Residues 1-29 (MQEAARRASLRKEHTPTNEKFGDLSKQDS) are disordered. The Cytoplasmic portion of the chain corresponds to 1–164 (MQEAARRASL…KIKRIESHFG (164 aa)). A helical transmembrane segment spans residues 165–202 (SVVSSYFTFLRWIVFVNIMITLIALVFVVLPETLADSV). Over 203-260 (ANEGRFNRTKTRKQIPANERVHADELAVVWHYDGYLRYSPLFYGYYSDDPFLGNKIKY) the chain is Extracellular. The N-linked (GalNAc...) asparagine glycan is linked to asparagine 209. Residues 261 to 292 (ALPLAYFMVTLTIFAYSFFAILRKMAANARMS) traverse the membrane as a helical segment. The Cytoplasmic portion of the chain corresponds to 293–349 (KLSGSKAEQYIFNWKLFTGWDYTIGNSETASNTVMAVVIKLRESIADIKKDAHGKFR). The helical transmembrane segment at 350–381 (LLQFSLRVFANIIICAMLGFSIYCIIFAVQKS) threads the bilayer. The Extracellular segment spans residues 382-388 (QVQDDGN). The helical transmembrane segment at 389–416 (LFTKNQVPSVVSTITHVFPMIFDLIGKM) threads the bilayer. Over 417-420 (ENYH) the chain is Cytoplasmic. The chain crosses the membrane as a helical span at residues 421 to 455 (PRTALRAHLGRVLILYTVNYITLIFALFEKMTALR). The Extracellular segment spans residues 456–667 (DRVNSTSTSS…NHDGHNNDIC (212 aa)). Residues 458–488 (VNSTSTSSSHRTKRQQGGWNPNMQRPPPYAS) are disordered. Cysteine 667 and cysteine 816 are oxidised to a cystine. A helical transmembrane segment spans residues 668-705 (WETIIGQEIVKLVTMDLIFTILSILVIDLFRGLWIKYC). Residues 696–720 (LFRGLWIKYCSSWWCWDIETTFPEY) form a required for interaction with tmie region. Topologically, residues 706–724 (SSWWCWDIETTFPEYGEFK) are cytoplasmic. The chain crosses the membrane as a helical span at residues 725–745 (VAENVLHIINNQGMIWLGLFF). The Extracellular portion of the chain corresponds to 746–748 (APL). The chain crosses the membrane as a helical span at residues 749 to 771 (LPAINNIKLIILMYIRGWAVMTC). The tract at residues 766 to 773 (WAVMTCNV) is required for interaction with tmie. The Cytoplasmic segment spans residues 772–785 (NVPAREIFRASRSS). The helical transmembrane segment at 786–809 (NFYLGILLIWLLLCTLPVGFVIAS) threads the bilayer. The Extracellular portion of the chain corresponds to 810-852 (MSPSRSCGPFARYQHFYTVVTREIEKRVDQTVLSYIRHIASPG). A helical membrane pass occupies residues 853 to 886 (VVIPIILFLILIIYFLFSLVRGLREANTDLQAQL). Residues 887–1285 (VHERTEEKKK…DEDDSPRQID (399 aa)) lie on the Cytoplasmic side of the membrane. Disordered regions lie at residues 940 to 962 (ADHA…DDER) and 1114 to 1285 (TIKE…RQID). The span at 948–961 (SSEESDINEDEDDE) shows a compositional bias: acidic residues. Composition is skewed to basic and acidic residues over residues 1121-1131 (DPGKSDKKQTS), 1146-1156 (DEARALREKMK), and 1167-1182 (TVEE…ESEF). Residues 1197–1208 (TEEENEEEETDS) are compositionally biased toward acidic residues.

The protein belongs to the TMC family. In terms of assembly, homodimer. Interacts with calm-1 and tmie to form the MET channel. Expressed in the ASH polymodal avoidance neurons. Also expressed in other sensory neurons, including the ADF, ASE, ADL, AQR, PQR, URX and PHA cells.

It localises to the cell membrane. It carries out the reaction Na(+)(in) = Na(+)(out). It catalyses the reaction Ca(2+)(in) = Ca(2+)(out). The catalysed reaction is K(+)(in) = K(+)(out). Pore-forming subunit of the mechanotransducer (MET) non-selective cation channel complex. The MET complex is composed of symmetric dimeric MET channels, each channel comprising two copies of pore-forming ion-conducting transmembrane TMC subunits and auxiliary proteins including the transmembrane inner ear protein/tmie, the calcium-binding protein/calm-1 and arrestin domain protein arrd-6. Sodium ions are the most permeable, whereas calcium and potassium have lower indices. Sodium-sensor ion channel that acts specifically in salt taste chemosensation. Required for salt-evoked neuronal activity and behavioral avoidance of high concentrations of NaCl. The protein is Transmembrane channel-like protein 1 (tmc-1) of Caenorhabditis elegans.